A 186-amino-acid chain; its full sequence is Ribosome-recycling factor (186 aa).

It belongs to the RRF family.

The protein localises to the cytoplasm. Its function is as follows. Responsible for the release of ribosomes from messenger RNA at the termination of protein biosynthesis. May increase the efficiency of translation by recycling ribosomes from one round of translation to another. This chain is Ribosome-recycling factor, found in Maricaulis maris (strain MCS10) (Caulobacter maris).